Consider the following 241-residue polypeptide: Adenosylcobinamide-GDP ribazoletransferase (241 aa).

The next 4 helical transmembrane spans lie at 34–54 (LGLP…AWAF), 108–128 (VGGL…FGWI), 184–206 (LPFS…WTCL), and 220–240 (FLGA…SSLP).

The protein belongs to the CobS family. Requires Mg(2+) as cofactor.

It localises to the cell membrane. It catalyses the reaction alpha-ribazole + adenosylcob(III)inamide-GDP = adenosylcob(III)alamin + GMP + H(+). The catalysed reaction is alpha-ribazole 5'-phosphate + adenosylcob(III)inamide-GDP = adenosylcob(III)alamin 5'-phosphate + GMP + H(+). It participates in cofactor biosynthesis; adenosylcobalamin biosynthesis; adenosylcobalamin from cob(II)yrinate a,c-diamide: step 7/7. Joins adenosylcobinamide-GDP and alpha-ribazole to generate adenosylcobalamin (Ado-cobalamin). Also synthesizes adenosylcobalamin 5'-phosphate from adenosylcobinamide-GDP and alpha-ribazole 5'-phosphate. This Methanopyrus kandleri (strain AV19 / DSM 6324 / JCM 9639 / NBRC 100938) protein is Adenosylcobinamide-GDP ribazoletransferase.